The sequence spans 490 residues: Protein nucleotidyltransferase YdiU (490 aa).

Positions 94, 96, 97, 117, 129, 130, 180, and 187 each coordinate ATP. Catalysis depends on D256, which acts as the Proton acceptor. Mg(2+) contacts are provided by N257 and D266. ATP is bound at residue D266.

Belongs to the SELO family. Mg(2+) is required as a cofactor. Mn(2+) serves as cofactor.

The enzyme catalyses L-seryl-[protein] + ATP = 3-O-(5'-adenylyl)-L-seryl-[protein] + diphosphate. The catalysed reaction is L-threonyl-[protein] + ATP = 3-O-(5'-adenylyl)-L-threonyl-[protein] + diphosphate. It carries out the reaction L-tyrosyl-[protein] + ATP = O-(5'-adenylyl)-L-tyrosyl-[protein] + diphosphate. It catalyses the reaction L-histidyl-[protein] + UTP = N(tele)-(5'-uridylyl)-L-histidyl-[protein] + diphosphate. The enzyme catalyses L-seryl-[protein] + UTP = O-(5'-uridylyl)-L-seryl-[protein] + diphosphate. The catalysed reaction is L-tyrosyl-[protein] + UTP = O-(5'-uridylyl)-L-tyrosyl-[protein] + diphosphate. Functionally, nucleotidyltransferase involved in the post-translational modification of proteins. It can catalyze the addition of adenosine monophosphate (AMP) or uridine monophosphate (UMP) to a protein, resulting in modifications known as AMPylation and UMPylation. The chain is Protein nucleotidyltransferase YdiU from Clostridium beijerinckii (strain ATCC 51743 / NCIMB 8052) (Clostridium acetobutylicum).